The chain runs to 54 residues: Ribulose bisphosphate carboxylase large chain (54 aa).

Residues 1 to 2 (MS) constitute a propeptide that is removed on maturation. N-acetylproline is present on proline 3. An N6,N6,N6-trimethyllysine modification is found at lysine 14.

This sequence belongs to the RuBisCO large chain family. Type I subfamily. Heterohexadecamer of 8 large chains and 8 small chains.

The protein resides in the plastid. The protein localises to the chloroplast. The catalysed reaction is 2 (2R)-3-phosphoglycerate + 2 H(+) = D-ribulose 1,5-bisphosphate + CO2 + H2O. It catalyses the reaction D-ribulose 1,5-bisphosphate + O2 = 2-phosphoglycolate + (2R)-3-phosphoglycerate + 2 H(+). In terms of biological role, ruBisCO catalyzes two reactions: the carboxylation of D-ribulose 1,5-bisphosphate, the primary event in carbon dioxide fixation, as well as the oxidative fragmentation of the pentose substrate in the photorespiration process. Both reactions occur simultaneously and in competition at the same active site. The polypeptide is Ribulose bisphosphate carboxylase large chain (rbcL) (Colletia hystrix (Crucifixion thorn)).